Here is a 92-residue protein sequence, read N- to C-terminus: MKFFVLVAIAFALLACVAQAQPVSDVDPIPEDHVLVHEDAHQEVLQHSRQKRATCDLLSKWNWNHTACAGHCIAKGFKGGYCNDKAVCVCRN.

The N-terminal stretch at 1–20 (MKFFVLVAIAFALLACVAQA) is a signal peptide. Positions 21-52 (QPVSDVDPIPEDHVLVHEDAHQEVLQHSRQKR) are excised as a propeptide. 3 disulfides stabilise this stretch: cysteine 55/cysteine 82, cysteine 68/cysteine 88, and cysteine 72/cysteine 90.

Belongs to the invertebrate defensin family. Type 1 subfamily. As to expression, hemolymph (at protein level).

Its subcellular location is the secreted. Functionally, responsible for the anti Gram-positive activity of immune hemolymph. Expressed in the absence of immune challenge during metamorphosis. The sequence is that of Defensin (Def) from Drosophila melanogaster (Fruit fly).